We begin with the raw amino-acid sequence, 250 residues long: 2,3-bisphosphoglycerate-dependent phosphoglycerate mutase (250 aa).

13 residues coordinate (2R)-2,3-bisphosphoglycerate: Arg-10, His-11, Asn-17, Gly-24, Arg-62, Glu-89, Tyr-92, Lys-100, Arg-116, Arg-117, His-184, Gly-185, and Asn-186. Catalysis depends on His-11, which acts as the Tele-phosphohistidine intermediate. Gly-24 serves as a coordination point for (2R)-3-phosphoglycerate. 5 residues coordinate (2R)-3-phosphoglycerate: Glu-89, Tyr-92, Lys-100, Arg-116, and Arg-117. The active-site Proton donor/acceptor is Glu-89. Asn-186 contacts (2R)-3-phosphoglycerate.

Belongs to the phosphoglycerate mutase family. BPG-dependent PGAM subfamily. As to expression, ubiquitously expressed with the highest expression in the sub-tegumental muscle layer (at protein level). Expressed in the tegument (at protein level).

Its subcellular location is the tegument. It carries out the reaction (2R)-2-phosphoglycerate = (2R)-3-phosphoglycerate. The protein operates within carbohydrate degradation; glycolysis; pyruvate from D-glyceraldehyde 3-phosphate: step 3/5. Strongly activated by 2,3-bisphosphoglycerate (2,3-BPG). Inhibited by vanadate in a dose-dependent manner. Its function is as follows. Catalyzes interconversion of 3- and 2-phosphoglycerate with 2,3-bisphosphoglycerate (2,3-BPG) as the primer of the reaction. Schistosomula have significant surface phosphoglycerate mutase activity also without 2,3-BPG. Binds human plasminogen and enhances its conversion to active thrombolytic plasmin in the presence of human tissue plasminogen activator (tPA) in vitro. Host-interactive surface protein, which may degrade vascular blood clots surrounding the worm in vivo and thus may help survival of the parasite in its host microenvironment. In Schistosoma mansoni (Blood fluke), this protein is 2,3-bisphosphoglycerate-dependent phosphoglycerate mutase.